The chain runs to 418 residues: Coenzyme A biosynthesis bifunctional protein CoaBC (418 aa).

The phosphopantothenoylcysteine decarboxylase stretch occupies residues 1–195 (MVDHKRIPKQ…ALPYDLAGRK (195 aa)). Positions 196–418 (LLVTAGGTRE…IVTFLAGCSS (223 aa)) are phosphopantothenate--cysteine ligase. CTP is bound by residues D285, K295, F336, K354, and K358.

This sequence in the N-terminal section; belongs to the HFCD (homo-oligomeric flavin containing Cys decarboxylase) superfamily. In the C-terminal section; belongs to the PPC synthetase family. The cofactor is Mg(2+). It depends on FMN as a cofactor.

It catalyses the reaction N-[(R)-4-phosphopantothenoyl]-L-cysteine + H(+) = (R)-4'-phosphopantetheine + CO2. The catalysed reaction is (R)-4'-phosphopantothenate + L-cysteine + CTP = N-[(R)-4-phosphopantothenoyl]-L-cysteine + CMP + diphosphate + H(+). It participates in cofactor biosynthesis; coenzyme A biosynthesis; CoA from (R)-pantothenate: step 2/5. Its pathway is cofactor biosynthesis; coenzyme A biosynthesis; CoA from (R)-pantothenate: step 3/5. In terms of biological role, catalyzes two sequential steps in the biosynthesis of coenzyme A. In the first step cysteine is conjugated to 4'-phosphopantothenate to form 4-phosphopantothenoylcysteine. In the second step the latter compound is decarboxylated to form 4'-phosphopantotheine. The polypeptide is Coenzyme A biosynthesis bifunctional protein CoaBC (Mycobacterium bovis (strain ATCC BAA-935 / AF2122/97)).